A 604-amino-acid polypeptide reads, in one-letter code: Transcriptional repressor rco-1 (604 aa).

2 disordered regions span residues 87-110 (RGGAPGNMNPPPQHPGQQQPPAIG) and 124-264 (GGQA…DRLP). Residues 144–163 (MPAPPGLQGPPPPPPPPSQQ) are compositionally biased toward pro residues. Low complexity-rich tracts occupy residues 164–177 (PPFQQQYQGPQGPG) and 190–209 (PGPAGKRGIGRPPAGGPATP). Positions 210 to 229 (QINTPIPYNGGPAQSPQVPT) are enriched in polar residues. 7 WD repeats span residues 295 to 324 (QHESVVCCVRFSMDGKYVATGCNRSAQIYD), 342 to 372 (TGDLYIRSVCFSPDGKYLATGAEDKLIRVWD), 384 to 414 (GHEQDIYSLDFSRDGRTIASGSGDRTVRLWD), 425 to 455 (SIEDGVTTVAISPDKQFVAAGSLDKSVRVWD), 469 to 499 (GHKDSVYSVAFSPDGRNLVSGSLDKTIKMWE), 523 to 553 (GHRDFVLSVALTPDSQWVLSGSKDRGVQFWD), and 565 to 600 (GHKNSVISVAPSPVTGPNGVGYFATGSGDMRARIWS).

In terms of biological role, represses transcription by RNA polymerase II. May be involved at several stages of conidiation and other growth and development processes. Appears to regulate genes that are expressed in asexual and sexual spore pathways. In Neurospora crassa (strain ATCC 24698 / 74-OR23-1A / CBS 708.71 / DSM 1257 / FGSC 987), this protein is Transcriptional repressor rco-1 (rco-1).